The sequence spans 403 residues: Phosphoglycerate kinase (403 aa).

Residues 21 to 23 (DFN), arginine 36, 59 to 62 (HLGR), arginine 119, and arginine 159 each bind substrate. Residues lysine 214, glycine 301, glutamate 332, and 359 to 362 (GGDS) contribute to the ATP site.

Belongs to the phosphoglycerate kinase family. Monomer.

Its subcellular location is the cytoplasm. The catalysed reaction is (2R)-3-phosphoglycerate + ATP = (2R)-3-phospho-glyceroyl phosphate + ADP. It participates in carbohydrate degradation; glycolysis; pyruvate from D-glyceraldehyde 3-phosphate: step 2/5. This Lactobacillus delbrueckii subsp. lactis protein is Phosphoglycerate kinase.